The sequence spans 429 residues: 3-phosphoshikimate 1-carboxyvinyltransferase (429 aa).

3-phosphoshikimate-binding residues include K11, S12, and R16. Residue K11 coordinates phosphoenolpyruvate. The phosphoenolpyruvate site is built by G82 and R110. Positions 155, 157, 302, and 329 each coordinate 3-phosphoshikimate. Position 157 (Q157) interacts with phosphoenolpyruvate. Residue D302 is the Proton acceptor of the active site. Residues R333 and R385 each contribute to the phosphoenolpyruvate site.

Belongs to the EPSP synthase family. In terms of assembly, monomer.

The protein resides in the cytoplasm. The catalysed reaction is 3-phosphoshikimate + phosphoenolpyruvate = 5-O-(1-carboxyvinyl)-3-phosphoshikimate + phosphate. The protein operates within metabolic intermediate biosynthesis; chorismate biosynthesis; chorismate from D-erythrose 4-phosphate and phosphoenolpyruvate: step 6/7. Catalyzes the transfer of the enolpyruvyl moiety of phosphoenolpyruvate (PEP) to the 5-hydroxyl of shikimate-3-phosphate (S3P) to produce enolpyruvyl shikimate-3-phosphate and inorganic phosphate. The polypeptide is 3-phosphoshikimate 1-carboxyvinyltransferase (Helicobacter pylori (strain HPAG1)).